The following is a 387-amino-acid chain: Phosphoglycerate kinase (387 aa).

Substrate contacts are provided by residues 21–23, arginine 36, 59–62, arginine 113, and arginine 146; these read DLN and HLGR. ATP contacts are provided by residues lysine 197, glutamate 314, and 340–343; that span reads GGDT.

The protein belongs to the phosphoglycerate kinase family. Monomer.

The protein resides in the cytoplasm. It catalyses the reaction (2R)-3-phosphoglycerate + ATP = (2R)-3-phospho-glyceroyl phosphate + ADP. It participates in carbohydrate degradation; glycolysis; pyruvate from D-glyceraldehyde 3-phosphate: step 2/5. This chain is Phosphoglycerate kinase, found in Aeromonas salmonicida (strain A449).